Consider the following 499-residue polypeptide: uncharacterized protein (499 aa).

A run of 12 helical transmembrane segments spans residues 51–71, 98–118, 127–147, 155–175, 187–207, 220–240, 301–321, 325–345, 352–372, 378–398, 412–432, and 444–464; these read LLFRLDLVLAPTIMILYLVAF, IIASVFYVTFILFEMPTTLLM, LAFIVISYSLTTIFTGFCHNF, LVLGFCEAGLFPCLALYLTMI, YLFASSALSGAFGGLFAYAVL, WLFIIEGLIGFVCGVAVYFII, CLYGFSTFLPAIISGMGYTSL, YMTIPVYILGAATYIAASFLS, GIILIIGNIFPIVGYILLLAC, VLYFACYLCSVGVYTGAGLNV, ATAISLQLAIANSSGILAGQI, and LTSLIAIFISTVLHVVNIFFL.

It belongs to the major facilitator superfamily. Allantoate permease family.

It is found in the golgi apparatus. It localises to the membrane. This is an uncharacterized protein from Schizosaccharomyces pombe (strain 972 / ATCC 24843) (Fission yeast).